The following is a 320-amino-acid chain: 2-oxoglutarate-dependent dioxygenase thnC (320 aa).

The Fe2OG dioxygenase domain occupies 174–278 (PLVQMKLIRY…HSCATFWHGD (105 aa)). Positions 199, 201, and 258 each coordinate Fe cation. Residue R268 participates in 2-oxoglutarate binding.

It belongs to the iron/ascorbate-dependent oxidoreductase family. It depends on Fe(2+) as a cofactor.

It catalyses the reaction trihazone A + 2-oxoglutarate + O2 + H(+) = trihazone D + succinate + 2 CO2 + H2O. The protein operates within secondary metabolite biosynthesis. 2-oxoglutarate-dependent dioxygenase; part of the gene cluster that produces the tetronate natural products trihazones. ThnC catalyzes the oxidative decarboxylation of trihazone A to trihazone D. The C4 hydrogen is first abstracted by the iron-oxo species generated in ThnC to give a tertiary radical at C4. This is followed by decarboxylation and removal of the second electron by the FeIII-OH center to give trihazone D. The pathway begins with the formation of trihazone A by the hybrid PKS-NRPS synthetase thnA and the trans-enoyl reductase thnE. Trihazone A is further decarboxylated by the 2-oxoglutarate-dependent dioxygenase thnC to produce trihazone D. The function of the FAD-dependent monooxygenase thnD has still to be identified. The protein is 2-oxoglutarate-dependent dioxygenase thnC of Trichoderma harzianum (Hypocrea lixii).